The sequence spans 133 residues: Ribosome-binding factor A (133 aa).

Belongs to the RbfA family. Monomer. Binds 30S ribosomal subunits, but not 50S ribosomal subunits or 70S ribosomes.

It is found in the cytoplasm. In terms of biological role, one of several proteins that assist in the late maturation steps of the functional core of the 30S ribosomal subunit. Associates with free 30S ribosomal subunits (but not with 30S subunits that are part of 70S ribosomes or polysomes). Required for efficient processing of 16S rRNA. May interact with the 5'-terminal helix region of 16S rRNA. This Pseudomonas fluorescens (strain ATCC BAA-477 / NRRL B-23932 / Pf-5) protein is Ribosome-binding factor A.